The following is a 161-amino-acid chain: Heme transporter hrg-6 (161 aa).

The next 4 membrane-spanning stretches (helical) occupy residues 13–33 (IAYTICGIIIGLFWACVYIFA), 38–58 (VALAACLTATAFAFETFYFYL), 75–95 (VLFWINLIVGFLSIGGMITAI), and 115–135 (WWSTATWFLVMLKWTWQNAFI).

This sequence belongs to the HRG family.

It localises to the membrane. Functionally, heme transporter. The chain is Heme transporter hrg-6 (hrg-6) from Caenorhabditis elegans.